Here is a 397-residue protein sequence, read N- to C-terminus: Heterogeneous nuclear ribonucleoprotein K homolog (397 aa).

A disordered region spans residues 1 to 41 (MMIKVGAAINGTDSPKAMKREHDNDDGDRTGRHKRPKTDGF). Over residues 16-30 (KAMKREHDNDDGDRT) the composition is skewed to basic and acidic residues. 2 KH domains span residues 49-111 (KFEV…LKDV) and 124-189 (PCEV…IEEV). The disordered stretch occupies residues 220–279 (GGFPGNMPAGGPPNNRGPAPQRGGQGPPGGPRSYGGAITQGGGQRSFEAGDFQQFRGGPG). The span at 224 to 241 (GNMPAGGPPNNRGPAPQR) shows a compositional bias: low complexity. The 64-residue stretch at 316–379 (VTTAQVTIPS…QQIHSAQYLL (64 aa)) folds into the KH 3 domain.

In terms of assembly, interacts with alg-1; the interaction is direct and may be strengthened through RNA-protein association. In terms of tissue distribution, expressed in gut, muscle, neuronal and hypodermal tissues. Highly expressed in the germline and oocytes.

It is found in the nucleus. Its subcellular location is the cytoplasm. Functionally, RNA-binding protein which functions together with alg-1, a component of the miRNA loading complex, to modulate the processing and activity of specific miRNAs such as miR-58 and let-7 to regulate gene expression at the post-transcriptional level during embryonic, hypodermal and neuronal development. Promotes the lsy-6-mediated repression of cog-1 in uterine cells. In embryos, may play a role in the DNA damage response. This is Heterogeneous nuclear ribonucleoprotein K homolog from Caenorhabditis elegans.